We begin with the raw amino-acid sequence, 275 residues long: Large ribosomal subunit protein uL2c (275 aa).

2 disordered regions span residues 29–60 (PEKSLTYGRHRSQGRNNRGIITSRHRGGGHKR) and 225–252 (MNPVDHPHGGGEGRAPIGRSKPVTPWGH). Residues 51-60 (SRHRGGGHKR) are compositionally biased toward basic residues.

It belongs to the universal ribosomal protein uL2 family. Part of the 50S ribosomal subunit.

The protein resides in the plastid. The protein localises to the chloroplast. This chain is Large ribosomal subunit protein uL2c (rpl2), found in Chlorokybus atmophyticus (Soil alga).